The chain runs to 454 residues: Bifunctional protein GlmU (454 aa).

Positions 1–226 (MALNVVILAA…AIEVEGANNR (226 aa)) are pyrophosphorylase. Residues 8 to 11 (LAAG), Lys-22, Gln-73, 78 to 79 (GT), 100 to 102 (YGD), Gly-137, Glu-151, Asn-166, and Asn-224 each bind UDP-N-acetyl-alpha-D-glucosamine. Asp-102 is a binding site for Mg(2+). Residue Asn-224 participates in Mg(2+) binding. Positions 227-247 (VQLAQLERAYQAREAEKLMIA) are linker. The segment at 248–454 (GANLRDPSRI…GWQRPVKIKE (207 aa)) is N-acetyltransferase. 2 residues coordinate UDP-N-acetyl-alpha-D-glucosamine: Arg-330 and Lys-348. His-360 acts as the Proton acceptor in catalysis. UDP-N-acetyl-alpha-D-glucosamine-binding residues include Tyr-363 and Asn-374. Acetyl-CoA is bound by residues Ala-377, 383 to 384 (NY), Ser-402, Ala-420, and Arg-437.

This sequence in the N-terminal section; belongs to the N-acetylglucosamine-1-phosphate uridyltransferase family. In the C-terminal section; belongs to the transferase hexapeptide repeat family. As to quaternary structure, homotrimer. Requires Mg(2+) as cofactor.

It is found in the cytoplasm. The catalysed reaction is alpha-D-glucosamine 1-phosphate + acetyl-CoA = N-acetyl-alpha-D-glucosamine 1-phosphate + CoA + H(+). The enzyme catalyses N-acetyl-alpha-D-glucosamine 1-phosphate + UTP + H(+) = UDP-N-acetyl-alpha-D-glucosamine + diphosphate. It functions in the pathway nucleotide-sugar biosynthesis; UDP-N-acetyl-alpha-D-glucosamine biosynthesis; N-acetyl-alpha-D-glucosamine 1-phosphate from alpha-D-glucosamine 6-phosphate (route II): step 2/2. Its pathway is nucleotide-sugar biosynthesis; UDP-N-acetyl-alpha-D-glucosamine biosynthesis; UDP-N-acetyl-alpha-D-glucosamine from N-acetyl-alpha-D-glucosamine 1-phosphate: step 1/1. The protein operates within bacterial outer membrane biogenesis; LPS lipid A biosynthesis. In terms of biological role, catalyzes the last two sequential reactions in the de novo biosynthetic pathway for UDP-N-acetylglucosamine (UDP-GlcNAc). The C-terminal domain catalyzes the transfer of acetyl group from acetyl coenzyme A to glucosamine-1-phosphate (GlcN-1-P) to produce N-acetylglucosamine-1-phosphate (GlcNAc-1-P), which is converted into UDP-GlcNAc by the transfer of uridine 5-monophosphate (from uridine 5-triphosphate), a reaction catalyzed by the N-terminal domain. This Shewanella sp. (strain MR-7) protein is Bifunctional protein GlmU.